The sequence spans 412 residues: Pyruvate dehydrogenase E1 component subunit alpha, mitochondrial (412 aa).

Residues histidine 104, tyrosine 130, arginine 131, alanine 169, glycine 177, valine 179, aspartate 208, glycine 209, alanine 210, asparagine 237, and tyrosine 239 each coordinate pyruvate. Thiamine diphosphate-binding residues include tyrosine 130 and arginine 131. Glycine 177, valine 179, aspartate 208, glycine 209, alanine 210, and asparagine 237 together coordinate thiamine diphosphate. A Mg(2+)-binding site is contributed by aspartate 208. Residues asparagine 237 and tyrosine 239 each contribute to the Mg(2+) site. A thiamine diphosphate-binding site is contributed by histidine 304.

In terms of assembly, tetramer of 2 alpha and 2 beta subunits. It depends on thiamine diphosphate as a cofactor. Mg(2+) serves as cofactor.

The protein resides in the mitochondrion matrix. It carries out the reaction N(6)-[(R)-lipoyl]-L-lysyl-[protein] + pyruvate + H(+) = N(6)-[(R)-S(8)-acetyldihydrolipoyl]-L-lysyl-[protein] + CO2. Its activity is regulated as follows. E1 activity is regulated by phosphorylation (inactivation) and dephosphorylation (activation) of the alpha subunit. Functionally, the pyruvate dehydrogenase complex catalyzes the overall conversion of pyruvate to acetyl-CoA and CO(2). It contains multiple copies of three enzymatic components: pyruvate dehydrogenase (E1), dihydrolipoamide acetyltransferase (E2) and lipoamide dehydrogenase (E3). The chain is Pyruvate dehydrogenase E1 component subunit alpha, mitochondrial (PDA1) from Kluyveromyces lactis (strain ATCC 8585 / CBS 2359 / DSM 70799 / NBRC 1267 / NRRL Y-1140 / WM37) (Yeast).